Reading from the N-terminus, the 244-residue chain is 14-3-3 protein beta/alpha (244 aa).

Met1 is modified (N-acetylmethionine).

The protein belongs to the 14-3-3 family. Homodimer, and heterodimer with other family members.

Its subcellular location is the cytoplasm. Adapter protein implicated in the regulation of a large spectrum of both general and specialized signaling pathways. Binds to a large number of partners, usually by recognition of a phosphoserine or phosphothreonine motif. Binding generally results in the modulation of the activity of the binding partner. The protein is 14-3-3 protein beta/alpha (ywhab) of Xenopus tropicalis (Western clawed frog).